A 68-amino-acid chain; its full sequence is MPKLKTKSSAKKRFKISATGKVMMAQAGKRHGMIKRTNSQIRKLRGTTAMSKQDGKIVKSYMPYSLRG.

It belongs to the bacterial ribosomal protein bL35 family.

This is Large ribosomal subunit protein bL35 from Pelagibacter ubique (strain HTCC1062).